The sequence spans 215 residues: Probable ribosome-binding factor A, chloroplastic (215 aa).

The N-terminal 52 residues, 1-52 (MPNLLHTNQSHFFFLHHPPIYTVSSKTQAFHFPQSMAPVNLRTNLSVRRTVR), are a transit peptide targeting the chloroplast. Positions 183–192 (KGSGEGKTEP) are enriched in basic and acidic residues. The tract at residues 183 to 210 (KGSGEGKTEPSDSTEDDQDWEVDDPDED) is disordered. Positions 194 to 210 (DSTEDDQDWEVDDPDED) are enriched in acidic residues.

It belongs to the RbfA family.

It localises to the plastid. The protein resides in the chloroplast. The protein is Probable ribosome-binding factor A, chloroplastic of Arabidopsis thaliana (Mouse-ear cress).